Consider the following 169-residue polypeptide: Chorismate pyruvate-lyase (169 aa).

Positions 35, 77, 115, and 156 each coordinate substrate.

It belongs to the UbiC family. In terms of assembly, monomer.

The protein resides in the cytoplasm. The enzyme catalyses chorismate = 4-hydroxybenzoate + pyruvate. Its pathway is cofactor biosynthesis; ubiquinone biosynthesis. Its function is as follows. Removes the pyruvyl group from chorismate, with concomitant aromatization of the ring, to provide 4-hydroxybenzoate (4HB) for the ubiquinone pathway. This is Chorismate pyruvate-lyase from Cronobacter sakazakii (strain ATCC BAA-894) (Enterobacter sakazakii).